Reading from the N-terminus, the 525-residue chain is 2-isopropylmalate synthase (525 aa).

Positions valine 12–threonine 274 constitute a Pyruvate carboxyltransferase domain. Mn(2+)-binding residues include aspartate 21, histidine 209, histidine 211, and asparagine 245. The tract at residues lysine 398–serine 525 is regulatory domain.

This sequence belongs to the alpha-IPM synthase/homocitrate synthase family. LeuA type 1 subfamily. In terms of assembly, homodimer. Mn(2+) is required as a cofactor.

It is found in the cytoplasm. It carries out the reaction 3-methyl-2-oxobutanoate + acetyl-CoA + H2O = (2S)-2-isopropylmalate + CoA + H(+). It participates in amino-acid biosynthesis; L-leucine biosynthesis; L-leucine from 3-methyl-2-oxobutanoate: step 1/4. Its function is as follows. Catalyzes the condensation of the acetyl group of acetyl-CoA with 3-methyl-2-oxobutanoate (2-ketoisovalerate) to form 3-carboxy-3-hydroxy-4-methylpentanoate (2-isopropylmalate). The polypeptide is 2-isopropylmalate synthase (Bradyrhizobium sp. (strain ORS 278)).